The sequence spans 147 residues: MRTTFLAKPGEIEKKWYIIDAKDVVLGRLSTVVASILRGKNKPTFTPNVDMGDNVIIINASEVKLTGKKATDKVYYHHSNHPGGLKARTAGNYREFNPEKLLELSIHGMLPKNTLGRKQGLNLHVYAGSEHDHAAQKPEALDINKLV.

It belongs to the universal ribosomal protein uL13 family. As to quaternary structure, part of the 50S ribosomal subunit.

Its function is as follows. This protein is one of the early assembly proteins of the 50S ribosomal subunit, although it is not seen to bind rRNA by itself. It is important during the early stages of 50S assembly. In Leuconostoc mesenteroides subsp. mesenteroides (strain ATCC 8293 / DSM 20343 / BCRC 11652 / CCM 1803 / JCM 6124 / NCDO 523 / NBRC 100496 / NCIMB 8023 / NCTC 12954 / NRRL B-1118 / 37Y), this protein is Large ribosomal subunit protein uL13.